The sequence spans 228 residues: 7-cyano-7-deazaguanine synthase (228 aa).

11–21 (LSGGLDSATCL) serves as a coordination point for ATP. The Zn(2+) site is built by Cys191, Cys201, Cys204, and Cys207.

The protein belongs to the QueC family. Zn(2+) is required as a cofactor.

The enzyme catalyses 7-carboxy-7-deazaguanine + NH4(+) + ATP = 7-cyano-7-deazaguanine + ADP + phosphate + H2O + H(+). It participates in purine metabolism; 7-cyano-7-deazaguanine biosynthesis. Its function is as follows. Catalyzes the ATP-dependent conversion of 7-carboxy-7-deazaguanine (CDG) to 7-cyano-7-deazaguanine (preQ(0)). This Azoarcus sp. (strain BH72) protein is 7-cyano-7-deazaguanine synthase.